Here is an 82-residue protein sequence, read N- to C-terminus: ATP synthase subunit c (82 aa).

The next 2 helical transmembrane spans lie at methionine 5–isoleucine 25 and phenylalanine 55–phenylalanine 75.

It belongs to the ATPase C chain family. As to quaternary structure, F-type ATPases have 2 components, F(1) - the catalytic core - and F(0) - the membrane proton channel. F(1) has five subunits: alpha(3), beta(3), gamma(1), delta(1), epsilon(1). F(0) has three main subunits: a(1), b(2) and c(10-14). The alpha and beta chains form an alternating ring which encloses part of the gamma chain. F(1) is attached to F(0) by a central stalk formed by the gamma and epsilon chains, while a peripheral stalk is formed by the delta and b chains.

It is found in the cell membrane. Functionally, f(1)F(0) ATP synthase produces ATP from ADP in the presence of a proton or sodium gradient. F-type ATPases consist of two structural domains, F(1) containing the extramembraneous catalytic core and F(0) containing the membrane proton channel, linked together by a central stalk and a peripheral stalk. During catalysis, ATP synthesis in the catalytic domain of F(1) is coupled via a rotary mechanism of the central stalk subunits to proton translocation. Key component of the F(0) channel; it plays a direct role in translocation across the membrane. A homomeric c-ring of between 10-14 subunits forms the central stalk rotor element with the F(1) delta and epsilon subunits. The protein is ATP synthase subunit c of Carboxydothermus hydrogenoformans (strain ATCC BAA-161 / DSM 6008 / Z-2901).